Reading from the N-terminus, the 144-residue chain is UPF0547 protein C16orf87 homolog (144 aa).

Positions 33–112 are disordered; that stretch reads HAKQSQRLPP…EEKEKQEKEV (80 aa). A compositionally biased stretch (polar residues) spans 35-45; it reads KQSQRLPPTSE. The segment covering 50 to 62 has biased composition (basic residues); it reads PKRRRTERIKRER. 2 stretches are compositionally biased toward basic and acidic residues: residues 63–74 and 99–112; these read IHTAVNRDLENR and KKHEEEKEKQEKEV. Positions 94 to 122 form a coiled coil; it reads KTATTKKHEEEKEKQEKEVDMYANLSDEK.

This sequence belongs to the UPF0547 family.

In Xenopus laevis (African clawed frog), this protein is UPF0547 protein C16orf87 homolog.